We begin with the raw amino-acid sequence, 151 residues long: Transcription antitermination protein NusB (151 aa).

The protein belongs to the NusB family.

Functionally, involved in transcription antitermination. Required for transcription of ribosomal RNA (rRNA) genes. Binds specifically to the boxA antiterminator sequence of the ribosomal RNA (rrn) operons. This is Transcription antitermination protein NusB from Photobacterium profundum (strain SS9).